Consider the following 92-residue polypeptide: Protein 10 (92 aa).

One can recognise an EF-hand domain in the interval 18 to 29 (FMQKYDKNSDQH).

The protein belongs to the calbindin family. In terms of tissue distribution, brain.

This Cavia porcellus (Guinea pig) protein is Protein 10.